Here is a 223-residue protein sequence, read N- to C-terminus: Probable transaldolase (223 aa).

Residue Lys92 is the Schiff-base intermediate with substrate of the active site.

This sequence belongs to the transaldolase family. Type 3B subfamily.

The protein localises to the cytoplasm. The enzyme catalyses D-sedoheptulose 7-phosphate + D-glyceraldehyde 3-phosphate = D-erythrose 4-phosphate + beta-D-fructose 6-phosphate. It functions in the pathway carbohydrate degradation; pentose phosphate pathway; D-glyceraldehyde 3-phosphate and beta-D-fructose 6-phosphate from D-ribose 5-phosphate and D-xylulose 5-phosphate (non-oxidative stage): step 2/3. Its function is as follows. Transaldolase is important for the balance of metabolites in the pentose-phosphate pathway. In Thermus thermophilus (strain ATCC BAA-163 / DSM 7039 / HB27), this protein is Probable transaldolase.